The following is a 29-amino-acid chain: Cytochrome b6-f complex subunit 8 (29 aa).

A helical transmembrane segment spans residues 3-23 (TVSIAWAALMVIFTFSISLVV).

Belongs to the PetN family. The 4 large subunits of the cytochrome b6-f complex are cytochrome b6, subunit IV (17 kDa polypeptide, PetD), cytochrome f and the Rieske protein, while the 4 small subunits are PetG, PetL, PetM and PetN. The complex functions as a dimer.

The protein localises to the plastid. It localises to the chloroplast thylakoid membrane. Component of the cytochrome b6-f complex, which mediates electron transfer between photosystem II (PSII) and photosystem I (PSI), cyclic electron flow around PSI, and state transitions. The chain is Cytochrome b6-f complex subunit 8 from Psilotum nudum (Whisk fern).